The primary structure comprises 142 residues: Probable inactive dual specificity protein phosphatase-like At4g18593 (142 aa).

The protein belongs to the protein-tyrosine phosphatase family. Non-receptor class dual specificity subfamily.

The chain is Probable inactive dual specificity protein phosphatase-like At4g18593 from Arabidopsis thaliana (Mouse-ear cress).